Consider the following 506-residue polypeptide: UDP-N-acetylglucosamine--peptide N-acetylglucosaminyltransferase GtfA subunit (506 aa).

The interval Met1 to Thr78 is N-terminus R-fold-1. Gly16–Tyr19 is a UDP binding site. The interval Val79–Tyr195 is extended beta-sheet domain. Residues Ser196–Gly306 are C-terminus R-fold-1. His242 is an N-acetyl-D-glucosamine binding site. Residues Ser307–Leu506 are R-fold-2. UDP contacts are provided by residues Arg328, Tyr357, and Gly383–Ala385. Gly405–Gly407 is an N-acetyl-D-glucosamine binding site. Thr409 provides a ligand contact to UDP.

Belongs to the glycosyltransferase group 1 family. Glycosyltransferase 4 subfamily. In terms of assembly, forms a heterotetramer with 2 subunits each of GtfA and GtfB. Part of the accessory SecA2/SecY2 protein translocation apparatus required to export cell wall protein GspB.

It is found in the cytoplasm. It localises to the cell membrane. The enzyme catalyses L-seryl-[protein] + UDP-N-acetyl-alpha-D-glucosamine = 3-O-[N-acetyl-alpha-D-glucosaminyl]-L-seryl-[protein] + UDP + H(+). It functions in the pathway protein modification; protein glycosylation. Required for polymorphic O-glycosylation of GspB, a serine-rich repeat cell wall protein encoded upstream in the same operon. Catalyzes the first step in glycosylation by transferring N-acetylglucosamine from UDP-GlcNAc to serine residues in GspB. Part of the accessory SecA2/SecY2 system specifically required to export GspB. Upon coexpression in E.coli with GtfB glycosylates GspB constructs. Glycosylation probably occurs intracellularly. Requires GtfB for glycosylation activity, it has no activity alone. Does not use UDP-glucose as substrate. Has a fast, probably processive glycosylation phase followed by a slower, non-processive phase. The enzyme probably modifies its tertiary conformation by opening and closing its intersubunit interfaces to accomodate the increasingly glycosylated substrate; protein substrate recognition is provided by GtfB. This chain is UDP-N-acetylglucosamine--peptide N-acetylglucosaminyltransferase GtfA subunit, found in Streptococcus gordonii.